Reading from the N-terminus, the 169-residue chain is MKLNEIRDNEGATKARMRVGRGIGSGKGKTGGRGVKGQKARSGVSIKGFEGGQMPLHRRLPKRGFNNIHAHDLNEVNLGRVQQAVDAGKLDANAAVTVEALVKAGIISRARDGVKLLGVGELTSKLSFEVTRASKSAIEAVEKAGGSVTTTFAAGVAHRGAAEGAVASA.

The disordered stretch occupies residues 20–56; that stretch reads GRGIGSGKGKTGGRGVKGQKARSGVSIKGFEGGQMPL. The span at 21 to 35 shows a compositional bias: gly residues; the sequence is RGIGSGKGKTGGRGV.

The protein belongs to the universal ribosomal protein uL15 family. Part of the 50S ribosomal subunit.

Binds to the 23S rRNA. This chain is Large ribosomal subunit protein uL15, found in Methylorubrum extorquens (strain CM4 / NCIMB 13688) (Methylobacterium extorquens).